The chain runs to 679 residues: Glycine--tRNA ligase beta subunit (679 aa).

The protein belongs to the class-II aminoacyl-tRNA synthetase family. As to quaternary structure, tetramer of two alpha and two beta subunits.

It localises to the cytoplasm. The catalysed reaction is tRNA(Gly) + glycine + ATP = glycyl-tRNA(Gly) + AMP + diphosphate. The protein is Glycine--tRNA ligase beta subunit of Streptococcus uberis (strain ATCC BAA-854 / 0140J).